Consider the following 528-residue polypeptide: uncharacterized protein (528 aa).

Composition is skewed to basic residues over residues 1 to 16 and 25 to 43; these read MGKA…KNHL and QLAR…SHTK. The interval 1-59 is disordered; that stretch reads MGKASKATKKFTKNHLKNTIERRKQLARSKKVYGTKNRNSHTKNKLESGTNDNNKNKED.

It belongs to the NOC2 family.

It localises to the nucleus. Its subcellular location is the nucleolus. This is an uncharacterized protein from Schizosaccharomyces pombe (strain 972 / ATCC 24843) (Fission yeast).